Reading from the N-terminus, the 540-residue chain is Glucose-6-phosphate isomerase (540 aa).

The Proton donor role is filled by Glu351. Catalysis depends on residues His382 and Lys506.

This sequence belongs to the GPI family.

It is found in the cytoplasm. The catalysed reaction is alpha-D-glucose 6-phosphate = beta-D-fructose 6-phosphate. The protein operates within carbohydrate biosynthesis; gluconeogenesis. It participates in carbohydrate degradation; glycolysis; D-glyceraldehyde 3-phosphate and glycerone phosphate from D-glucose: step 2/4. Functionally, catalyzes the reversible isomerization of glucose-6-phosphate to fructose-6-phosphate. This is Glucose-6-phosphate isomerase from Corynebacterium glutamicum (strain ATCC 13032 / DSM 20300 / JCM 1318 / BCRC 11384 / CCUG 27702 / LMG 3730 / NBRC 12168 / NCIMB 10025 / NRRL B-2784 / 534).